The primary structure comprises 149 residues: Arginine repressor (149 aa).

The protein belongs to the ArgR family.

The protein resides in the cytoplasm. The protein operates within amino-acid biosynthesis; L-arginine biosynthesis [regulation]. Regulates arginine biosynthesis genes. The chain is Arginine repressor from Listeria innocua serovar 6a (strain ATCC BAA-680 / CLIP 11262).